Here is a 432-residue protein sequence, read N- to C-terminus: MGKNVVILGTQWGDEGKGKIVDLLTEEVAAVARFQGGHNAGHTLVIDGQKTVLHLIPSGILRSNVACLIGNGVVLAPDALLSEIKTLEDKGVPVRQRLFLSPACPLILPYHKALDLAREERLGSAKIGTTGRGIGPAYEDKVARRGVRLGDLAKPERFAEKLKEIMQYQNFVLEHYYKVAPIDYQKTLDETLKMAEELLPMMADVTDMLHEFRKRDENVLFEGAQGSLLDIDLGTYPYVTSSNTTAGGTATGSGFGPMYLDYVLGITKAYATRVGSGPFPTELFDDVGAYLAKKGNEFGATTGRPRRCGWFDAVALRHAIQINSVSGICLTKLDVLDGLDVVKVCVGYRTADGAEITRPPIDCEAFGEVEPVYEELPGWKESTFGVKRVEDLPKNAQDYIAFLEKQIEAPIDVISTGPDRNETITLRHPFSA.

GTP is bound by residues 13 to 19 (GDEGKGK) and 41 to 43 (GHT). Asp-14 serves as the catalytic Proton acceptor. 2 residues coordinate Mg(2+): Asp-14 and Gly-41. IMP contacts are provided by residues 14 to 17 (DEGK), 39 to 42 (NAGH), Thr-130, Arg-144, Gln-225, Thr-240, and Arg-304. His-42 acts as the Proton donor in catalysis. Residue 300 to 306 (ATTGRPR) coordinates substrate. GTP-binding positions include Arg-306, 332-334 (KLD), and 415-417 (STG).

The protein belongs to the adenylosuccinate synthetase family. Homodimer. Requires Mg(2+) as cofactor.

The protein resides in the cytoplasm. The enzyme catalyses IMP + L-aspartate + GTP = N(6)-(1,2-dicarboxyethyl)-AMP + GDP + phosphate + 2 H(+). Its pathway is purine metabolism; AMP biosynthesis via de novo pathway; AMP from IMP: step 1/2. Its function is as follows. Plays an important role in the de novo pathway of purine nucleotide biosynthesis. Catalyzes the first committed step in the biosynthesis of AMP from IMP. The polypeptide is Adenylosuccinate synthetase (Hahella chejuensis (strain KCTC 2396)).